Reading from the N-terminus, the 203-residue chain is Small ribosomal subunit protein uS5 (203 aa).

The span at 1–18 (MENNVKKETIVDSEKVEK) shows a compositional bias: basic and acidic residues. A disordered region spans residues 1–36 (MENNVKKETIVDSEKVEKQQPVTAPVVNKKENTQPK). Residues 49–112 (FEERVVKIKR…KNANNNLIKV (64 aa)) enclose the S5 DRBM domain.

This sequence belongs to the universal ribosomal protein uS5 family. In terms of assembly, part of the 30S ribosomal subunit. Contacts proteins S4 and S8.

In terms of biological role, with S4 and S12 plays an important role in translational accuracy. Functionally, located at the back of the 30S subunit body where it stabilizes the conformation of the head with respect to the body. The chain is Small ribosomal subunit protein uS5 from Ureaplasma urealyticum serovar 10 (strain ATCC 33699 / Western).